Here is a 458-residue protein sequence, read N- to C-terminus: Sulfite efflux pump SSU1 (458 aa).

Residues 1–11 (MVANWVLALTR) lie on the Cytoplasmic side of the membrane. A helical transmembrane segment spans residues 12 to 32 (QFDPFMFMMVMGVGISSNILY). At 33-48 (SFPYPARWLRICSYIM) the chain is on the extracellular side. Residues 49 to 69 (FAIACLIFIAVQALQILHLIV) traverse the membrane as a helical segment. Residues 70-89 (YIKEKSFREYFNDFFRNMKH) are Cytoplasmic-facing. Residues 90-110 (NLFWGTYPMGLVTIINFLGAL) form a helical membrane-spanning segment. Residues 111–135 (SKANTTKSPTNARNLMIFVYVLWWY) lie on the Extracellular side of the membrane. Residues 136 to 156 (DLAVCLVIAWGISFLIWHDYY) traverse the membrane as a helical segment. The Cytoplasmic segment spans residues 157–176 (PLEGIGNYPSYNIKMASENM). A helical transmembrane segment spans residues 177–197 (KSVLLLDIIPLVVVASSCGTF). At 198–220 (TMSEIFFHAFNRNIQLITLVICA) the chain is on the extracellular side. Residues 221-241 (LTWLHAIIFVFILIAIYFWSL) form a helical membrane-spanning segment. At 242–252 (YINKIPPMTQV) the chain is on the cytoplasmic side. The helical transmembrane segment at 253–275 (FTLFLLLGPMGQGSFGVLLLTDN) threads the bilayer. At 276–309 (IKKYAGKYYPTDNITREQEILTIAVPWCFKILGM) the chain is on the extracellular side. The chain crosses the membrane as a helical span at residues 310–330 (VSAMALLAMGYFFTVISVVSI). The Cytoplasmic portion of the chain corresponds to 331-350 (LSYYNKKEIENETGKVKRVY). The helical transmembrane segment at 351-371 (TFHKGFWGMTFPMGTMSLGNE) threads the bilayer. At 372–387 (ELYVQYNQYVPLYAFR) the chain is on the extracellular side. Residues 388–408 (VLGTIYGGVCVCWSILCLLCT) traverse the membrane as a helical segment. The Cytoplasmic portion of the chain corresponds to 409–458 (LHEYSKKMLHAARKSSLFSESGTEKTTVSPYNSIESVEESNSALDFTRLA). A phosphoserine mark is found at S444, S448, and S450.

Belongs to the tellurite-resistance/dicarboxylate transporter (TDT) family.

Its subcellular location is the cell membrane. Involved in efflux of free sulfite. Mutations in the SSU1 gene cause sensitivity to sulfite. The chain is Sulfite efflux pump SSU1 (SSU1) from Saccharomyces cerevisiae (strain ATCC 204508 / S288c) (Baker's yeast).